Here is a 534-residue protein sequence, read N- to C-terminus: Melanopsin-B (534 aa).

The Extracellular portion of the chain corresponds to 1–32 (MDLGKTVEYGTHRQDAIAQIDVPDQVLYTIGS). The chain crosses the membrane as a helical span at residues 33 to 53 (FILIIGSVGIIGNMLVLYAFY). Residues 54–64 (RNKKLRTAPNY) are Cytoplasmic-facing. Residues 65–85 (FIINLAISDFLMSATQAPVCF) form a helical membrane-spanning segment. At 86–102 (LSSLHREWILGDIGCNV) the chain is on the extracellular side. A disulfide bridge connects residues cysteine 100 and cysteine 178. Residues 103 to 123 (YAFCGALFGITSMMTLLAISI) traverse the membrane as a helical segment. The Cytoplasmic portion of the chain corresponds to 124 to 146 (NRYIVITKPLQSIQWSSKKRTSQ). The chain crosses the membrane as a helical span at residues 147–167 (IIVLVWMYSLMWSLAPLLGWS). The Extracellular portion of the chain corresponds to 168–198 (SYVPEGLRISCTWDYVTSTMSNRSYTMMLCC). The N-linked (GlcNAc...) asparagine glycan is linked to asparagine 189. A helical transmembrane segment spans residues 199–219 (CVFFIPLIVISHCYLFMFLAI). The Cytoplasmic portion of the chain corresponds to 220 to 250 (RSTGRNVQKLGSYGRQSFLSQSMKNEWKMAK). Residues 251–271 (IAFVIIIVFVLSWSPYACVTL) form a helical membrane-spanning segment. The Extracellular portion of the chain corresponds to 272–286 (IAWAGHGKSLTPYSK). The chain crosses the membrane as a helical span at residues 287–307 (TVPAVIAKASAIYNPIIYGII). Lysine 294 bears the N6-(retinylidene)lysine mark. Topologically, residues 308–534 (HPKYRETIHK…LYEVVERFLS (227 aa)) are cytoplasmic. The tract at residues 478-501 (SNISETKEEHDNNSEEKSKRTEEE) is disordered. The segment covering 482–499 (ETKEEHDNNSEEKSKRTE) has biased composition (basic and acidic residues).

It belongs to the G-protein coupled receptor 1 family. Opsin subfamily. Highest level in the iris, high level in the inner nuclear layer, possibly in horizontal cells, and lowest level in retinal pigment epithelium. Expressed in melanophore cells of the skin.

The protein resides in the cell membrane. Functionally, photoreceptor implicated in non-image-forming responses to light. May be able to isomerize covalently bound all-trans retinal back to 11-cis retinal. In Xenopus laevis (African clawed frog), this protein is Melanopsin-B.